Reading from the N-terminus, the 496-residue chain is PE-PGRS family protein PE_PGRS1 (496 aa).

Residues 4–94 (LITSPATVAA…VCYAAAETAN (91 aa)) form the PE domain. The interval 461 to 480 (LIGNGGDGGPGMFGGPGGAG) is disordered.

It belongs to the mycobacterial PE family. PGRS subfamily.

It is found in the secreted. The protein resides in the cell wall. Its subcellular location is the host mitochondrion. When expressed in host mitochondria, induces mitochondrial stress which results in mitochondrial membrane depolarization, up-regulation of mitochondrial superoxides and release of cytochrome-C in the cytoplasm. The cytochrome-C in cytoplasm triggers the activation of caspase-9, caspase-3 and caspase-7, leading to the apoptosis of host macrophages. Being a late expressing protein, apoptosis induction by PE_PGRS1 may facilitate the M.tuberculosis survival and silent expansion of its niche at the site of granuloma. In terms of biological role, when expressed in THP-1 macrophages, promotes the survival of mycobacteria within macrophages after a 24- to 48-hour infection by blocking endoplasmic reticulum stress and inhibiting host cell apoptosis. Can chelate excessive intracellular calcium in THP-1 macrophages, which reduces the concentration of intracellular free Ca(2+) and blocks the PERK-eIF2alpha-ATF4 axis, thereby inhibiting the endoplasmic reticulum stress caused by infection. It also reduces the apoptosis of THP-1 macrophages by decreasing the activation of caspase-3 and caspase-9. The protein is PE-PGRS family protein PE_PGRS1 of Mycobacterium tuberculosis (strain ATCC 25618 / H37Rv).